The primary structure comprises 607 residues: Glutamine--fructose-6-phosphate aminotransferase [isomerizing] (607 aa).

The active-site Nucleophile; for GATase activity is the cysteine 2. The region spanning cysteine 2–asparagine 217 is the Glutamine amidotransferase type-2 domain. 2 consecutive SIS domains span residues isoleucine 283 to alanine 422 and valine 455 to proline 597. The active-site For Fru-6P isomerization activity is lysine 602.

In terms of assembly, homodimer.

It is found in the cytoplasm. It carries out the reaction D-fructose 6-phosphate + L-glutamine = D-glucosamine 6-phosphate + L-glutamate. Catalyzes the first step in hexosamine metabolism, converting fructose-6P into glucosamine-6P using glutamine as a nitrogen source. This Brucella abortus biovar 1 (strain 9-941) protein is Glutamine--fructose-6-phosphate aminotransferase [isomerizing].